The following is a 470-amino-acid chain: Ribulose bisphosphate carboxylase large chain (470 aa).

Positions 115 and 165 each coordinate substrate. Lys167 acts as the Proton acceptor in catalysis. Residue Lys169 coordinates substrate. Residues Lys193, Asp195, and Glu196 each coordinate Mg(2+). The residue at position 193 (Lys193) is an N6-carboxylysine. The active-site Proton acceptor is the His286. Substrate-binding residues include Arg287, His319, and Ser371.

This sequence belongs to the RuBisCO large chain family. Type I subfamily. In terms of assembly, heterohexadecamer of 8 large chains and 8 small chains. Requires Mg(2+) as cofactor.

The protein resides in the carboxysome. It catalyses the reaction 2 (2R)-3-phosphoglycerate + 2 H(+) = D-ribulose 1,5-bisphosphate + CO2 + H2O. The enzyme catalyses D-ribulose 1,5-bisphosphate + O2 = 2-phosphoglycolate + (2R)-3-phosphoglycerate + 2 H(+). Functionally, ruBisCO catalyzes two reactions: the carboxylation of D-ribulose 1,5-bisphosphate, the primary event in carbon dioxide fixation, as well as the oxidative fragmentation of the pentose substrate in the photorespiration process. Both reactions occur simultaneously and in competition at the same active site. The sequence is that of Ribulose bisphosphate carboxylase large chain from Synechococcus sp. (strain CC9311).